The primary structure comprises 224 residues: Dehydration-responsive element-binding protein 1G (224 aa).

Residues 1–16 (MDVSAALSSDYSSGTP) show a composition bias toward polar residues. Residues 1–46 (MDVSAALSSDYSSGTPSPVAADADDGSSAYMTVSSAPPKRRAGRTK) form a disordered region. Positions 54 to 111 (VFKGVRRRNPGRWVCEVREPHGKQRIWLGTFETAEMAARAHDVAALALRGRAACLNFA) form a DNA-binding region, AP2/ERF. Disordered stretches follow at residues 139 to 161 (AFRP…SGAT) and 200 to 224 (PPMA…LWSY).

It belongs to the AP2/ERF transcription factor family. ERF subfamily.

It localises to the nucleus. Its function is as follows. Transcriptional activator that binds specifically to the DNA sequence 5'-[AG]CCGAC-3'. Binding to the C-repeat/DRE element mediates high salinity- and dehydration-inducible transcription. The sequence is that of Dehydration-responsive element-binding protein 1G (DREB1G) from Oryza sativa subsp. japonica (Rice).